The following is a 97-amino-acid chain: Cell division topological specificity factor (97 aa).

This sequence belongs to the MinE family.

In terms of biological role, prevents the cell division inhibition by proteins MinC and MinD at internal division sites while permitting inhibition at polar sites. This ensures cell division at the proper site by restricting the formation of a division septum at the midpoint of the long axis of the cell. The chain is Cell division topological specificity factor from Synechococcus sp. (strain RCC307).